We begin with the raw amino-acid sequence, 885 residues long: DNA replication licensing factor REC (885 aa).

The interval 36-76 (RVIPAGGNRQPNQGEPGAPDAPSVPPATRQPRGWSRTAGKR) is disordered. The C4-type zinc-finger motif lies at 281–308 (CSRCQMEIAMRQRGTFQPRPYQCKRSEC). In terms of domain architecture, MCM spans 430 to 627 (SFKLLVQSIA…ERDMSLTAHV (198 aa)). An ATP-binding site is contributed by 473–480 (GDPGIGKT). A compositionally biased stretch (polar residues) spans 796–805 (SLKEGSSRQG). The disordered stretch occupies residues 796 to 818 (SLKEGSSRQGTRGGGGAGGGAGK). Positions 806 to 817 (TRGGGGAGGGAG) are enriched in gly residues.

It belongs to the MCM family.

The protein localises to the nucleus. In terms of biological role, required for meiotic DNA recombination in females. Probably not involved in DNA repair and recombination in somatic cells. In Drosophila melanogaster (Fruit fly), this protein is DNA replication licensing factor REC (rec).